The sequence spans 383 residues: Pheromone-regulated membrane protein 10 (383 aa).

Residues 1 to 65 lie on the Cytoplasmic side of the membrane; that stretch reads MIVSFGDATT…ILADTNLYPP (65 aa). Residues 66-86 form a helical membrane-spanning segment; that stretch reads WMCVLLYAFCSAMVTPYAFGG. Residue Asp-87 is a topological domain, extracellular. A helical transmembrane segment spans residues 88–108; sequence WVNLAISFFMGLCVGSLQFIL. Residues 109–117 are Cytoplasmic-facing; the sequence is SQKSYMYSN. The helical transmembrane segment at 118–138 threads the bilayer; the sequence is VFEISASIVVSFCGRAFGSIP. The Extracellular portion of the chain corresponds to 139-141; it reads RSH. Residues 142-162 traverse the membrane as a helical segment; sequence ICFGAVTQGSLALILPGYIIL. At 163–180 the chain is on the cytoplasmic side; the sequence is CGALELQSRSLVAGAVRM. The chain crosses the membrane as a helical span at residues 181–201; that stretch reads FYAIIYSLFLGFGITLGSALF. At 202–216 the chain is on the extracellular side; sequence GWMYHNATNEISCPQ. The chain crosses the membrane as a helical span at residues 217-237; it reads LISPWFRFLFVPAFTISISLL. Residues 238–241 lie on the Cytoplasmic side of the membrane; it reads NQAH. Residues 242 to 262 form a helical membrane-spanning segment; it reads ISQLPVMVFISCTGYVVTYWA. At 263–271 the chain is on the extracellular side; that stretch reads GKHFANSTE. Residues 272 to 292 form a helical membrane-spanning segment; sequence FTAALAAFVIGVLGNLYSRIW. Lys-293 is a topological domain (cytoplasmic). Residues 294–314 traverse the membrane as a helical segment; that stretch reads GLAVSAMLPAIFVQVPSGIAS. The Extracellular portion of the chain corresponds to 315 to 352; that stretch reads QNSLLSGLQSANTIVNANETITTSTSDPSSSMSFGMTM. Residues 353–373 traverse the membrane as a helical segment; sequence IQVCVGISVGLFASSLFVYPF. Over 374–383 the chain is Cytoplasmic; it reads GKKKTGLFSL.

It belongs to the ThrE exporter (TC 2.A.79) family.

It localises to the membrane. The sequence is that of Pheromone-regulated membrane protein 10 (PRM10) from Saccharomyces cerevisiae (strain ATCC 204508 / S288c) (Baker's yeast).